An 854-amino-acid chain; its full sequence is Aryl hydrocarbon receptor (854 aa).

The propeptide occupies 1–9; it reads MSSGANITY. Positions 1 to 38 are disordered; that stretch reads MSSGANITYASRKRRKPVQKTVKPIPAEGIKSNPSKRH. Short sequence motifs (nuclear localization signal) lie at residues 12–15 and 36–41; these read RKRR and KRHRDR. The bHLH domain occupies 26-79; that stretch reads PAEGIKSNPSKRHRDRLNTELDRLASLLPFPQDVINKLDKLSVLRLSVSYLRAK. Positions 37-65 are DNA-binding; it reads RHRDRLNTELDRLASLLPFPQDVINKLDK. 3 required for maintaining the overall integrity of the AHR:ARNT heterodimer and its transcriptional activity regions span residues 49–81, 116–124, and 264–266; these read LASL…AKSF, LLQALNGFV, and FAI. The Nuclear export signal signature appears at 63–71; it reads LDKLSVLRL. The PAS 1 domain occupies 111 to 175; that stretch reads QEGEFLLQAL…AEFQRQLHWA (65 aa). The PAS 2 domain maps to 270-340; sequence LQPPSILEIR…CAESHIRMIK (71 aa). One can recognise a PAC domain in the interval 346 to 387; it reads MTVFRLLAKHSRWRWVQSNARLIYRNGRPDYIIATQRPLTDE. The disordered stretch occupies residues 425–452; it reads LPIRTKSNTSRKDWAPQSTPSKDSFHPS. Polar residues predominate over residues 440–452; it reads PQSTPSKDSFHPS.

In terms of assembly, homodimer. Heterodimer; efficient DNA binding requires dimerization with another bHLH protein. Interacts with ARNT; the heterodimer ARNT:AHR binds to core DNA sequence 5'-TGCGTG-3' within the dioxin response element (DRE) of target gene promoters and activates their transcription. Binds MYBBP1A. Interacts with coactivators including SRC-1, RIP140 and NOCA7, and with the corepressor SMRT. Interacts with NEDD8 and IVNS1ABP. Interacts with BMAL1. Interacts with HSP90AB1. Interacts with TIPARP; leading to mono-ADP-ribosylation of AHR and subsequent inhibition of AHR. Mono-ADP-ribosylated, leading to inhibit transcription activator activity of AHR.

It is found in the cytoplasm. It localises to the nucleus. Functionally, ligand-activated transcription factor that enables cells to adapt to changing conditions by sensing compounds from the environment, diet, microbiome and cellular metabolism, and which plays important roles in development, immunity and cancer. Upon ligand binding, translocates into the nucleus, where it heterodimerizes with ARNT and induces transcription by binding to xenobiotic response elements (XRE). Regulates a variety of biological processes, including angiogenesis, hematopoiesis, drug and lipid metabolism, cell motility and immune modulation. Xenobiotics can act as ligands: upon xenobiotic-binding, activates the expression of multiple phase I and II xenobiotic chemical metabolizing enzyme genes (such as the CYP1A1 gene). Mediates biochemical and toxic effects of halogenated aromatic hydrocarbons. Next to xenobiotics, natural ligands derived from plants, microbiota, and endogenous metabolism are potent AHR agonists. Tryptophan (Trp) derivatives constitute an important class of endogenous AHR ligands. Acts as a negative regulator of anti-tumor immunity: indoles and kynurenic acid generated by Trp catabolism act as ligand and activate AHR, thereby promoting AHR-driven cancer cell motility and suppressing adaptive immunity. Regulates the circadian clock by inhibiting the basal and circadian expression of the core circadian component PER1. Inhibits PER1 by repressing the CLOCK-BMAL1 heterodimer mediated transcriptional activation of PER1. The heterodimer ARNT:AHR binds to core DNA sequence 5'-TGCGTG-3' within the dioxin response element (DRE) of target gene promoters and activates their transcription. This is Aryl hydrocarbon receptor (Ahr) from Mus spretus (Western Mediterranean mouse).